A 664-amino-acid chain; its full sequence is Cyclic nucleotide-gated channel alpha-2 (664 aa).

Residues 1 to 10 (MMTEKSNGVK) show a composition bias toward polar residues. The interval 1–61 (MMTEKSNGVK…LQRLAEMDTP (61 aa)) is disordered. The Cytoplasmic segment spans residues 1–146 (MMTEKSNGVK…PAGDWYYRWL (146 aa)). Residues 147–168 (FVIAMPVLYNWCLLVARACFSD) form a helical membrane-spanning segment. The Extracellular segment spans residues 169-178 (LQRNYFVVWL). A helical transmembrane segment spans residues 179–199 (VLDYFSDTVYIADLIIRLRTG). Over 200-224 (FLEQGLLVKDPKKLRDNYIHTLQFK) the chain is Cytoplasmic. Residues 225–243 (LDVASIIPTDLIYFAVGIH) form a helical membrane-spanning segment. Residues 244–248 (SPEVR) are Extracellular-facing. A helical membrane pass occupies residues 249-267 (FNRLLHFARMFEFFDRTET). Topologically, residues 268–274 (RTSYPNI) are cytoplasmic. Residues 272–380 (PNIFRISNLV…GNVGSMISNM (109 aa)) form an ion conduction pathway region. Residues 275 to 298 (FRISNLVLYILVIIHWNACIYYAI) traverse the membrane as a helical segment. The Extracellular segment spans residues 299–321 (SKSIGFGVDTWVYPNITDPEYGY). 2 helical membrane passes run 322–356 (LARE…LFVI) and 357–381 (FDFL…SNMN). Residues 339 to 342 (TIGE) form a selectivity filter region. A C-linker region spans residues 382-458 (ATRAEFQAKI…STLKKVRIFQ (77 aa)). At 382 to 664 (ATRAEFQAKI…INTPEPAVAE (283 aa)) the chain is on the cytoplasmic side. The tract at residues 462–582 (AGLLVELVLK…EERGREILMK (121 aa)) is cyclic nucleotide-binding domain. 4 residues coordinate 3',5'-cyclic GMP: Gly522, Ser525, Arg538, and Thr539. Residues Arg538 and Thr539 each coordinate 3',5'-cyclic AMP. A coiled-coil region spans residues 599-653 (VQEKLEQLETNMETLYTRFARLLAEYTGAQQKLKQRITVLETKMKQNHEDDYLSD).

The protein belongs to the cyclic nucleotide-gated cation channel (TC 1.A.1.5) family. CNGA2 subfamily. In terms of assembly, the olfactory cyclic nucleotide-gated channel is an heterotetramer composed of CNGA2, CNGA4 and CNGB1b subunits with 2:1:1 stoichiometry.

The protein localises to the cell projection. The protein resides in the cilium membrane. The enzyme catalyses Ca(2+)(in) = Ca(2+)(out). It carries out the reaction Na(+)(in) = Na(+)(out). The catalysed reaction is K(+)(in) = K(+)(out). It catalyses the reaction NH4(+)(in) = NH4(+)(out). The enzyme catalyses Rb(+)(in) = Rb(+)(out). It carries out the reaction Li(+)(in) = Li(+)(out). The catalysed reaction is Cs(+)(in) = Cs(+)(out). Functionally, pore-forming subunit of the olfactory cyclic nucleotide-gated channel. Operates in the cilia of olfactory sensory neurons where chemical stimulation of the odorant is converted to an electrical signal. Mediates odorant-induced cAMP-dependent Ca(2+) influx triggering neuron depolarization. The rise of intracellular Ca(2+) levels potentiates the olfactory response by activating Ca(2+)-dependent Cl(-) channels, but it also serves as a negative feedback signal to desensitize the channel for rapid adaptation to odorants. Conducts cAMP- and cGMP-gated ion currents, with permeability for monovalent and divalent cations. The polypeptide is Cyclic nucleotide-gated channel alpha-2 (Mus musculus (Mouse)).